Reading from the N-terminus, the 212-residue chain is Cytidylate kinase (212 aa).

An ATP-binding site is contributed by 7–15; sequence GPAASGKGT.

This sequence belongs to the cytidylate kinase family. Type 1 subfamily.

The protein localises to the cytoplasm. The catalysed reaction is CMP + ATP = CDP + ADP. The enzyme catalyses dCMP + ATP = dCDP + ADP. This chain is Cytidylate kinase, found in Rhodopseudomonas palustris (strain HaA2).